Consider the following 315-residue polypeptide: Methionyl-tRNA formyltransferase (315 aa).

113–116 contacts (6S)-5,6,7,8-tetrahydrofolate; sequence SLLP.

The protein belongs to the Fmt family.

The catalysed reaction is L-methionyl-tRNA(fMet) + (6R)-10-formyltetrahydrofolate = N-formyl-L-methionyl-tRNA(fMet) + (6S)-5,6,7,8-tetrahydrofolate + H(+). In terms of biological role, attaches a formyl group to the free amino group of methionyl-tRNA(fMet). The formyl group appears to play a dual role in the initiator identity of N-formylmethionyl-tRNA by promoting its recognition by IF2 and preventing the misappropriation of this tRNA by the elongation apparatus. This Escherichia fergusonii (strain ATCC 35469 / DSM 13698 / CCUG 18766 / IAM 14443 / JCM 21226 / LMG 7866 / NBRC 102419 / NCTC 12128 / CDC 0568-73) protein is Methionyl-tRNA formyltransferase.